A 171-amino-acid polypeptide reads, in one-letter code: Calcium-binding protein F-like (171 aa).

EF-hand domains follow at residues 6–41 (KIFEEVQNFVQNYDLNKDGSVTSYDIYLSFLKKMNG), 57–80 (IDMDHDGKFTYCEIAKYCVDKAKK), 89–124 (AALADVEAMLLRFDKDKDKKLSQTEFLEYFKGRGYT), and 130–159 (DQYLKIIDLDKDGCVSVNELQEWFKKRRID). The Ca(2+) site is built by D19, N21, D23, S25, and D30. Positions 102, 104, 106, 108, 113, 137, 139, 141, 143, and 148 each coordinate Ca(2+).

The chain is Calcium-binding protein F-like (cbp12) from Dictyostelium discoideum (Social amoeba).